A 119-amino-acid polypeptide reads, in one-letter code: Large ribosomal subunit protein uL22 (119 aa).

The protein belongs to the universal ribosomal protein uL22 family. Part of the 50S ribosomal subunit.

This protein binds specifically to 23S rRNA; its binding is stimulated by other ribosomal proteins, e.g. L4, L17, and L20. It is important during the early stages of 50S assembly. It makes multiple contacts with different domains of the 23S rRNA in the assembled 50S subunit and ribosome. Functionally, the globular domain of the protein is located near the polypeptide exit tunnel on the outside of the subunit, while an extended beta-hairpin is found that lines the wall of the exit tunnel in the center of the 70S ribosome. The sequence is that of Large ribosomal subunit protein uL22 from Rickettsia peacockii (strain Rustic).